A 206-amino-acid chain; its full sequence is Two-component response regulator ARR7 (206 aa).

The Response regulatory domain occupies histidine 25–methionine 152. Aspartate 85 bears the 4-aspartylphosphate mark. Residues serine 165 to leucine 206 form a disordered region.

It belongs to the ARR family. Type-A subfamily. In terms of processing, two-component system major event consists of a His-to-Asp phosphorelay between a sensor histidine kinase (HK) and a response regulator (RR). In plants, the His-to-Asp phosphorelay involves an additional intermediate named Histidine-containing phosphotransfer protein (HPt). This multistep phosphorelay consists of a His-Asp-His-Asp sequential transfer of a phosphate group between first a His and an Asp of the HK protein, followed by the transfer to a conserved His of the HPt protein and finally the transfer to an Asp in the receiver domain of the RR protein. Predominantly expressed in roots and young flowers.

The protein localises to the nucleus. Functions as a response regulator involved in His-to-Asp phosphorelay signal transduction system. Phosphorylation of the Asp residue in the receiver domain activates the ability of the protein to promote the transcription of target genes. Type-A response regulators seem to act as negative regulators of the cytokinin signaling. In Arabidopsis thaliana (Mouse-ear cress), this protein is Two-component response regulator ARR7 (ARR7).